We begin with the raw amino-acid sequence, 658 residues long: Sodium/nucleoside cotransporter 1 (658 aa).

The Cytoplasmic segment spans residues 1 to 75 (MEKASGRKSL…ARTFCQRHAS (75 aa)). A helical membrane pass occupies residues 76 to 99 (LFKKILLGLLCLAYAAYFLAACIL). Topologically, residues 100–104 (DFQRA) are extracellular. Residues 105–123 (LALFVITCLVILVLLLHFL) form a helical membrane-spanning segment. Over 124 to 142 (KKFLGKKLTRCLKPFKNSQ) the chain is Cytoplasmic. A helical transmembrane segment spans residues 143-162 (LRLWIKRVFAGVSLVGLILW). Over 163 to 173 (LALDTAQRPEQ) the chain is Extracellular. The chain crosses the membrane as a helical span at residues 174–190 (LISFAGICMFVLILFAC). Topologically, residues 191–196 (SKHHSA) are cytoplasmic. A helical membrane pass occupies residues 197–217 (VSWRTVFWGLGLQFVFGLLVI). Over 218-256 (RTDPGFIAFQWLGDQVQIFLAYTVAGSSFVLGDTLVNDV) the chain is Extracellular. The helical transmembrane segment at 257 to 278 (FAFQSLPIIIFFGCVMSILYYL) threads the bilayer. Over 279–289 (GLVQWVVQKIA) the chain is Cytoplasmic. Residues 290–313 (WFLQVTMRTTATETLAVAGNIFVG) form a helical membrane-spanning segment. The Extracellular segment spans residues 314-332 (MTEAPLLIRPYLADLTLSE). The chain crosses the membrane as a helical span at residues 333-355 (IHAVMTSGFATISGTVLGAFISF). At 356–361 (GIDASS) the chain is on the cytoplasmic side. A helical transmembrane segment spans residues 362-381 (LISASVMGAPCALALSKLVY). Over 382–418 (PEEEESKFKSKEGVKLPRGKESNVLEAASNGATDAIA) the chain is Extracellular. Residues 419-441 (LVANVAANLVAFLAVLAFINAAL) traverse the membrane as a helical segment. At 442-452 (SWLGELVDIQG) the chain is on the cytoplasmic side. A helical transmembrane segment spans residues 453 to 474 (LTFQVICSYILRPMVYMMGVEW). Over 475 to 529 (TDCPMVAEMVGIKFFTNEFVAYQQLSQYKKKRLSGMEEWIDGQKQWISVRAEVIT) the chain is Extracellular. Residues 530–553 (TFSLCGFANLSSIGITLGGLTSMV) traverse the membrane as a helical segment. Over 554-564 (PHRKSDLSKVV) the chain is Cytoplasmic. The chain crosses the membrane as a helical span at residues 565-587 (IRALFTGSCVSFISACVAGILYV). Residues 588-658 (PRGAETDCVS…CGFYNNTVCA (71 aa)) lie on the Extracellular side of the membrane. The N-linked (GlcNAc...) asparagine glycan is linked to Asn-653.

Belongs to the concentrative nucleoside transporter (CNT) (TC 2.A.41) family. In terms of processing, N-glycosylated. N-glycosylation is required for localization to the plasma membrane and the transporter activity.

The protein resides in the cell membrane. Its subcellular location is the apical cell membrane. It carries out the reaction uridine(out) + Na(+)(out) = uridine(in) + Na(+)(in). The catalysed reaction is thymidine(out) + Na(+)(out) = thymidine(in) + Na(+)(in). The enzyme catalyses cytidine(out) + Na(+)(out) = cytidine(in) + Na(+)(in). It catalyses the reaction adenosine(out) + Na(+)(out) = adenosine(in) + Na(+)(in). Due to its high apparent affinity but slow transport, adenosine could act as a negative regulator of pyrimidine transport under some conditions. In terms of biological role, sodium and pyrimidine nucleoside symporter of the plasma membrane that imports uridine, thymidine and cytidine into cells by coupling their transport to the transmembrane sodium electrochemical gradient. Also transports adenosine, an atypical substrate transported with high apparent affinity, but low maximum velocity. Therefore, exhibits the transport characteristics of the nucleoside transport system cit or N2 subtype (N2/cit). Involved in renal nucleoside (re)absorption. This Oryctolagus cuniculus (Rabbit) protein is Sodium/nucleoside cotransporter 1 (SLC28A1).